Here is a 336-residue protein sequence, read N- to C-terminus: Cytoskeleton protein RodZ (336 aa).

The Cytoplasmic segment spans residues Met-1–Gly-111. Residues Leu-19–Leu-71 form the HTH cro/C1-type domain. The segment at residues Gln-30–Glu-49 is a DNA-binding region (H-T-H motif). A helical; Signal-anchor for type II membrane protein transmembrane segment spans residues Trp-112–Trp-132. Residues Trp-133–Gln-336 lie on the Periplasmic side of the membrane. Polar residues predominate over residues Asp-148 to Leu-164. A disordered region spans residues Asp-148–Thr-245. Positions Asp-165 to Thr-201 are enriched in low complexity. Residues Val-202–Val-217 show a composition bias toward polar residues. Positions Asp-218–Asp-240 are enriched in low complexity.

Belongs to the RodZ family.

Its subcellular location is the cell inner membrane. Cytoskeletal protein that is involved in cell-shape control through regulation of the length of the long axis. This is Cytoskeleton protein RodZ from Escherichia coli O7:K1 (strain IAI39 / ExPEC).